The sequence spans 206 residues: Guanylate kinase (206 aa).

A Guanylate kinase-like domain is found at 5-183 (GNLFVVAAPS…AVFDLKTIVH (179 aa)). 12–19 (APSGAGKS) contributes to the ATP binding site.

This sequence belongs to the guanylate kinase family.

It localises to the cytoplasm. The enzyme catalyses GMP + ATP = GDP + ADP. Functionally, essential for recycling GMP and indirectly, cGMP. The chain is Guanylate kinase from Polaromonas sp. (strain JS666 / ATCC BAA-500).